Reading from the N-terminus, the 263-residue chain is Proline rich transmembrane protein 1B (263 aa).

Residues 1–17 (MEAGAGGAGSDTKGGGS) show a composition bias toward gly residues. Positions 1–107 (MEAGAGGAGS…IGFVGEPPPY (107 aa)) are disordered. 2 stretches are compositionally biased toward low complexity: residues 37 to 47 (QMPAQPALPQL) and 75 to 86 (DAPAQAAGEAGP). 2 helical membrane passes run 190–210 (MMESVLVTLFCCLLTGLIAIV) and 238–258 (VLFSLLFGVFVSTSWVIYVVV).

This sequence belongs to the CD225/Dispanin family.

The protein resides in the membrane. The protein is Proline rich transmembrane protein 1B of Homo sapiens (Human).